The chain runs to 64 residues: MTLLSSISKIGTIKNGNSLNEITSTISNNEAKGSPSFSGNQSTKSIGDLLLQIAIITKATTKNK.

This is Protein sigN173 from Dictyostelium discoideum (Social amoeba).